The following is a 357-amino-acid chain: Chorismate synthase (357 aa).

Basic and acidic residues predominate over residues 38–49; it reads EKDIQPDLDRRK. The segment at 38–60 is disordered; it reads EKDIQPDLDRRKPGTSRYTTPRR. NADP(+) is bound by residues R48 and R54. FMN contacts are provided by residues 125–127, 243–244, G283, 298–302, and R324; these read RSS, NA, and KPTSS.

It belongs to the chorismate synthase family. As to quaternary structure, homotetramer. It depends on FMNH2 as a cofactor.

The catalysed reaction is 5-O-(1-carboxyvinyl)-3-phosphoshikimate = chorismate + phosphate. Its pathway is metabolic intermediate biosynthesis; chorismate biosynthesis; chorismate from D-erythrose 4-phosphate and phosphoenolpyruvate: step 7/7. Catalyzes the anti-1,4-elimination of the C-3 phosphate and the C-6 proR hydrogen from 5-enolpyruvylshikimate-3-phosphate (EPSP) to yield chorismate, which is the branch point compound that serves as the starting substrate for the three terminal pathways of aromatic amino acid biosynthesis. This reaction introduces a second double bond into the aromatic ring system. This Haemophilus influenzae (strain PittGG) protein is Chorismate synthase.